The following is a 262-amino-acid chain: Ribosome maturation factor RimP (262 aa).

Positions 197 to 262 (RELGVLPPPP…LGQTDPTEGD (66 aa)) are disordered. Basic residues predominate over residues 223 to 233 (KLPKAKLKAAK). The span at 240–254 (TKEHRLAAAERKRLG) shows a compositional bias: basic and acidic residues.

The protein belongs to the RimP family.

Its subcellular location is the cytoplasm. In terms of biological role, required for maturation of 30S ribosomal subunits. The sequence is that of Ribosome maturation factor RimP from Rhodopseudomonas palustris (strain BisB18).